The following is a 499-amino-acid chain: Probable cytosol aminopeptidase (499 aa).

Positions 267 and 272 each coordinate Mn(2+). Residue Lys-279 is part of the active site. Positions 290, 349, and 351 each coordinate Mn(2+). Arg-353 is a catalytic residue.

Belongs to the peptidase M17 family. The cofactor is Mn(2+).

The protein localises to the cytoplasm. The catalysed reaction is Release of an N-terminal amino acid, Xaa-|-Yaa-, in which Xaa is preferably Leu, but may be other amino acids including Pro although not Arg or Lys, and Yaa may be Pro. Amino acid amides and methyl esters are also readily hydrolyzed, but rates on arylamides are exceedingly low.. It carries out the reaction Release of an N-terminal amino acid, preferentially leucine, but not glutamic or aspartic acids.. Presumably involved in the processing and regular turnover of intracellular proteins. Catalyzes the removal of unsubstituted N-terminal amino acids from various peptides. This chain is Probable cytosol aminopeptidase, found in Buchnera aphidicola subsp. Acyrthosiphon pisum (strain Tuc7).